The primary structure comprises 77 residues: Apelin (77 aa).

The N-terminal stretch at 1 to 22 (MNLSFCVQALLLLWLSLTAVCG) is a signal peptide. Positions 23–41 (VPLMLPPDGKGLEEGNMRY) are excised as a propeptide. Residues 45 to 77 (PRTSRTGPGAWQGGRRKFRRQRPRLSHKGPMPF) are disordered. The segment covering 58 to 71 (GRRKFRRQRPRLSH) has biased composition (basic residues).

The protein belongs to the apelin family. Several active peptides may be produced by proteolytic processing of the peptide precursor. Expressed in the lung, testis, ovary, uterus and mammary gland. Expressed in neurons in the thalamic paraventricular and hypothalamic supraoptic nuclei. The lung, testis and uterus mainly contain a large form that looks like apelin-36, whereas the mammary gland seems to contain 2 forms of apelin, a large form close to apelin-36 and a small form close to apelin-13 (at protein level). Widely expressed in the adult, with highest levels in the mammary gland of lactating animals, very high levels in the lung, intermediate levels in the spinal cord, ovary, adipose tissue, brain (neuronal cell bodies and fibers in the supraoptic and the paraventricular nuclei), heart and testis, and lowest levels in the pituitary gland, kidney, stomach, uterus and pancreas.

Its subcellular location is the secreted. The protein resides in the extracellular space. In terms of biological role, peptide hormone that functions as endogenous ligand for the G-protein-coupled apelin receptor (APLNR/APJ), that plays a role in cadiovascular homeostasis. Functions as a balanced agonist activating both G(i) protein pathway and beta-arrestin pathway of APLNR. Downstream G proteins activation, apelin can inhibit cAMP production and activate key intracellular effectors such as ERKs. On the other hand, APLNR activation induces beta-arrestin recruitment to the membrane leading to desensitization and internalization of the receptor. Apelin blunts cardiac hypertrophic induction from APLNR on response to pathological stimuli, but also induces myocardial hypertrophy under normal conditions. Apelin-36 dissociates more hardly than (pyroglu)apelin-13 from APLNR. Involved in the regulation of cardiac precursor cell movements during gastrulation and heart morphogenesis. Has an inhibitory effect on cytokine production in response to T-cell receptor/CD3 cross-linking; the oral intake of apelin in the colostrum and the milk might therefore modulate immune responses in neonates. Plays a role in early coronary blood vessels formation. Mediates myocardial contractility in an ERK1/2-dependent manner. May also have a role in the central control of body fluid homeostasis by influencing vasopressin release and drinking behavior. The sequence is that of Apelin from Rattus norvegicus (Rat).